We begin with the raw amino-acid sequence, 117 residues long: Large ribosomal subunit protein bL19 (117 aa).

It belongs to the bacterial ribosomal protein bL19 family.

Functionally, this protein is located at the 30S-50S ribosomal subunit interface and may play a role in the structure and function of the aminoacyl-tRNA binding site. The chain is Large ribosomal subunit protein bL19 from Desulfotalea psychrophila (strain LSv54 / DSM 12343).